Reading from the N-terminus, the 252-residue chain is Sensory transduction protein LytR (252 aa).

Residues 2 to 116 (KALIVDDEPL…RINQAVNKVD (115 aa)) form the Response regulatory domain. Position 53 is a 4-aspartylphosphate (Asp53). In terms of domain architecture, HTH LytTR-type spans 147-251 (LPIEVDERIH…MKTFKQQLGL (105 aa)).

Post-translationally, phosphorylated by LytS.

The protein localises to the cytoplasm. In terms of biological role, member of the two-component regulatory system LytR/LytS that probably regulates genes involved in cell wall metabolism. The polypeptide is Sensory transduction protein LytR (lytR) (Staphylococcus epidermidis (strain ATCC 12228 / FDA PCI 1200)).